Here is a 459-residue protein sequence, read N- to C-terminus: Bifunctional protein GlmU (459 aa).

A pyrophosphorylase region spans residues 1–230; the sequence is MSNRFAVILA…FDETLGVNDR (230 aa). UDP-N-acetyl-alpha-D-glucosamine-binding positions include 9 to 12, lysine 23, glutamine 73, and 78 to 79; these read LAAG and GT. Aspartate 103 provides a ligand contact to Mg(2+). 4 residues coordinate UDP-N-acetyl-alpha-D-glucosamine: glycine 140, glutamate 155, asparagine 170, and asparagine 228. Asparagine 228 contacts Mg(2+). Residues 231–251 are linker; sequence VALSQAEVIMKNRINHKNMVN. An N-acetyltransferase region spans residues 252-459; that stretch reads GVTIIDPSNT…VDQLLNKKKS (208 aa). UDP-N-acetyl-alpha-D-glucosamine is bound by residues arginine 333 and lysine 351. Catalysis depends on histidine 363, which acts as the Proton acceptor. Residues tyrosine 366 and asparagine 377 each contribute to the UDP-N-acetyl-alpha-D-glucosamine site. Acetyl-CoA contacts are provided by residues 386 to 387, alanine 423, and arginine 440; that span reads NY.

This sequence in the N-terminal section; belongs to the N-acetylglucosamine-1-phosphate uridyltransferase family. It in the C-terminal section; belongs to the transferase hexapeptide repeat family. As to quaternary structure, homotrimer. The cofactor is Mg(2+).

It is found in the cytoplasm. The catalysed reaction is alpha-D-glucosamine 1-phosphate + acetyl-CoA = N-acetyl-alpha-D-glucosamine 1-phosphate + CoA + H(+). The enzyme catalyses N-acetyl-alpha-D-glucosamine 1-phosphate + UTP + H(+) = UDP-N-acetyl-alpha-D-glucosamine + diphosphate. It participates in nucleotide-sugar biosynthesis; UDP-N-acetyl-alpha-D-glucosamine biosynthesis; N-acetyl-alpha-D-glucosamine 1-phosphate from alpha-D-glucosamine 6-phosphate (route II): step 2/2. Its pathway is nucleotide-sugar biosynthesis; UDP-N-acetyl-alpha-D-glucosamine biosynthesis; UDP-N-acetyl-alpha-D-glucosamine from N-acetyl-alpha-D-glucosamine 1-phosphate: step 1/1. It functions in the pathway bacterial outer membrane biogenesis; LPS lipid A biosynthesis. Its function is as follows. Catalyzes the last two sequential reactions in the de novo biosynthetic pathway for UDP-N-acetylglucosamine (UDP-GlcNAc). The C-terminal domain catalyzes the transfer of acetyl group from acetyl coenzyme A to glucosamine-1-phosphate (GlcN-1-P) to produce N-acetylglucosamine-1-phosphate (GlcNAc-1-P), which is converted into UDP-GlcNAc by the transfer of uridine 5-monophosphate (from uridine 5-triphosphate), a reaction catalyzed by the N-terminal domain. In Bacillus cytotoxicus (strain DSM 22905 / CIP 110041 / 391-98 / NVH 391-98), this protein is Bifunctional protein GlmU.